A 157-amino-acid chain; its full sequence is Homeobox protein DBX2 (157 aa).

Residues 9-68 (GILRRAVFSEDQRKALEKMFQKQKYISKTDRKKLAINLGLKESQVKIWFQNRRMKWRNSK) constitute a DNA-binding region (homeobox). The tract at residues 105-157 (SQEQTSPRWKEKSPGNSERLTSTQPPPRANSSQSPLYLYPDHDTANKAVTSSD) is disordered. Over residues 118–139 (PGNSERLTSTQPPPRANSSQSP) the composition is skewed to polar residues.

Belongs to the H2.0 homeobox family. As to expression, localized to the central nervous system during embryogenesis. It is found restricted to the rostro-caudal and dorso-ventral regions of the hindbrain. In the ventricular zone of the spinal cord, it localizes to the dorsal part of the basal plate. In the adult, it is detected in ovary.

The protein localises to the nucleus. In terms of biological role, appears to perform a very early function in establishing the identity of a subset of cells that originate in the region of the ventricular zone in the developing spinal cord and in the hindbrain. The sequence is that of Homeobox protein DBX2 (DBX2) from Gallus gallus (Chicken).